The chain runs to 338 residues: uncharacterized protein (338 aa).

The signal sequence occupies residues 1–29; that stretch reads MIKQLYKNITICTLALSTTFTVLPATSYA.

The protein belongs to the aerolysin family.

This is an uncharacterized protein from Staphylococcus aureus (strain MSSA476).